Reading from the N-terminus, the 475-residue chain is uncharacterized protein (475 aa).

Residues 19–39 traverse the membrane as a helical segment; the sequence is LVSAILILSILIWLIITIFFA.

The protein localises to the membrane. This is an uncharacterized protein from Mycoplasma pneumoniae (strain ATCC 29342 / M129 / Subtype 1) (Mycoplasmoides pneumoniae).